The chain runs to 482 residues: MKFIIKLFPEITIKSQSVRLRFIKILTGNIRNVLKHYDETLAVVRHWDNIEVRAKDENQRLAIRDALTRIPGIHHILEVEDVPFTDMHDIFEKALAQYREQLEGKTFCVRVKRRGKHEFSSIEVERYVGGGLNQHIESARVKLTNPDVTVHLEVEDDRLLLIKGRYEGIGGFPIGTQEDVLSLISGGFDSGVSSYMLMRRGCRVHYCFFNLGGAAHEIGVRQVAHYLWNRFGSSHRVRFVAINFEPVVGEILEKVDDGQMGVVLKRMMVRAASKVAERYGVQALVTGEALGQVSSQTLTNLRLIDNVSDTLILRPLISYDKEHIINLARQIGTEDFARTMPEYCGVISKSPTVKAIKAKIEAEEENFDFSILDKVVEEANNVDIREIAQQTQQEVVEVETVSGFGPNDVILDIRSVDEQDDKPLKVEGVDVVSLPFYKLSTKFGDLDQSKTWLLWCERGVMSRLQALYLREQGFENVKVYRP.

The region spanning 61 to 165 is the THUMP domain; sequence LAIRDALTRI…DDRLLLIKGR (105 aa). Residues 183 to 184, Lys-265, Gly-287, and Gln-296 each bind ATP; that span reads LI. Cysteines 344 and 456 form a disulfide. The Rhodanese domain maps to 404 to 482; the sequence is FGPNDVILDI…GFENVKVYRP (79 aa). The Cysteine persulfide intermediate role is filled by Cys-456.

Belongs to the ThiI family.

The protein resides in the cytoplasm. It carries out the reaction [ThiI sulfur-carrier protein]-S-sulfanyl-L-cysteine + a uridine in tRNA + 2 reduced [2Fe-2S]-[ferredoxin] + ATP + H(+) = [ThiI sulfur-carrier protein]-L-cysteine + a 4-thiouridine in tRNA + 2 oxidized [2Fe-2S]-[ferredoxin] + AMP + diphosphate. It catalyses the reaction [ThiS sulfur-carrier protein]-C-terminal Gly-Gly-AMP + S-sulfanyl-L-cysteinyl-[cysteine desulfurase] + AH2 = [ThiS sulfur-carrier protein]-C-terminal-Gly-aminoethanethioate + L-cysteinyl-[cysteine desulfurase] + A + AMP + 2 H(+). The protein operates within cofactor biosynthesis; thiamine diphosphate biosynthesis. In terms of biological role, catalyzes the ATP-dependent transfer of a sulfur to tRNA to produce 4-thiouridine in position 8 of tRNAs, which functions as a near-UV photosensor. Also catalyzes the transfer of sulfur to the sulfur carrier protein ThiS, forming ThiS-thiocarboxylate. This is a step in the synthesis of thiazole, in the thiamine biosynthesis pathway. The sulfur is donated as persulfide by IscS. This is tRNA sulfurtransferase from Salmonella enteritidis PT4 (strain P125109).